Here is a 56-residue protein sequence, read N- to C-terminus: Large ribosomal subunit protein bL33 (56 aa).

It belongs to the bacterial ribosomal protein bL33 family.

The chain is Large ribosomal subunit protein bL33 from Aliarcobacter butzleri (strain RM4018) (Arcobacter butzleri).